The following is a 218-amino-acid chain: Protein N-lysine methyltransferase METTL21A (218 aa).

S-adenosyl-L-methionine contacts are provided by residues W47, 73–75 (GAG), D94, W125, and A143.

This sequence belongs to the methyltransferase superfamily. METTL21 family. As to quaternary structure, interacts with heat shock 70 family members; at least some of these proteins are methylation substrates.

It is found in the cytoplasm. The catalysed reaction is L-lysyl-[protein] + 3 S-adenosyl-L-methionine = N(6),N(6),N(6)-trimethyl-L-lysyl-[protein] + 3 S-adenosyl-L-homocysteine + 3 H(+). In terms of biological role, protein-lysine methyltransferase that selectively trimethylates residues in heat shock protein 70 (HSP70) family members. Contributes to the in vivo trimethylation of Lys residues in HSPA1 and HSPA8. In vitro methylates 'Lys-561' in HSPA1, 'Lys-564' in HSPA2, 'Lys-585' in HSPA5, 'Lys-563' in HSPA6 and 'Lys-561' in HSPA8. This chain is Protein N-lysine methyltransferase METTL21A (METTL21A), found in Bos taurus (Bovine).